Reading from the N-terminus, the 405-residue chain is Tryptophan synthase beta chain (405 aa).

The residue at position 98 (Lys98) is an N6-(pyridoxal phosphate)lysine.

This sequence belongs to the TrpB family. In terms of assembly, tetramer of two alpha and two beta chains. Pyridoxal 5'-phosphate is required as a cofactor.

It carries out the reaction (1S,2R)-1-C-(indol-3-yl)glycerol 3-phosphate + L-serine = D-glyceraldehyde 3-phosphate + L-tryptophan + H2O. The protein operates within amino-acid biosynthesis; L-tryptophan biosynthesis; L-tryptophan from chorismate: step 5/5. The beta subunit is responsible for the synthesis of L-tryptophan from indole and L-serine. This Xanthomonas axonopodis pv. citri (strain 306) protein is Tryptophan synthase beta chain.